A 412-amino-acid chain; its full sequence is Na(+)-translocating NADH-quinone reductase subunit B (412 aa).

3 consecutive transmembrane segments (helical) span residues 57–77, 127–147, and 163–183; these read MILVWFAVFPAMFWGMYNVGL, VFFLPIYITVFIVGGFWEVLF, and SILFALIVPPTLPLWQAALGI. T236 is subject to FMN phosphoryl threonine. The next 5 membrane-spanning stretches (helical) occupy residues 270–290, 297–317, 322–342, 358–378, and 381–401; these read GSIGEVSTLMILIGGAIILFG, IVAGVMIGMIATATLFNVIGS, MFSMPWYWHLVLGGFAFGMMF, WSYGVLIGVMCVLIRVVNPAY, and GMMLAILFANLFAPLFDYLVV.

It belongs to the NqrB/RnfD family. In terms of assembly, composed of six subunits; NqrA, NqrB, NqrC, NqrD, NqrE and NqrF. FMN is required as a cofactor.

The protein localises to the cell inner membrane. The catalysed reaction is a ubiquinone + n Na(+)(in) + NADH + H(+) = a ubiquinol + n Na(+)(out) + NAD(+). In terms of biological role, NQR complex catalyzes the reduction of ubiquinone-1 to ubiquinol by two successive reactions, coupled with the transport of Na(+) ions from the cytoplasm to the periplasm. NqrA to NqrE are probably involved in the second step, the conversion of ubisemiquinone to ubiquinol. The protein is Na(+)-translocating NADH-quinone reductase subunit B of Klebsiella pneumoniae (strain 342).